Here is a 473-residue protein sequence, read N- to C-terminus: Ribulose bisphosphate carboxylase large chain 2 (473 aa).

Substrate is bound by residues asparagine 116 and threonine 166. Lysine 168 acts as the Proton acceptor in catalysis. Residue lysine 170 coordinates substrate. Mg(2+) is bound by residues lysine 194, aspartate 196, and glutamate 197. Lysine 194 carries the N6-carboxylysine modification. The active-site Proton acceptor is histidine 287. 3 residues coordinate substrate: arginine 288, histidine 320, and serine 372.

Belongs to the RuBisCO large chain family. Type I subfamily. As to quaternary structure, heterohexadecamer of 8 large chains and 8 small chains. Mg(2+) is required as a cofactor.

It carries out the reaction 2 (2R)-3-phosphoglycerate + 2 H(+) = D-ribulose 1,5-bisphosphate + CO2 + H2O. The enzyme catalyses D-ribulose 1,5-bisphosphate + O2 = 2-phosphoglycolate + (2R)-3-phosphoglycerate + 2 H(+). In terms of biological role, ruBisCO catalyzes two reactions: the carboxylation of D-ribulose 1,5-bisphosphate, the primary event in carbon dioxide fixation, as well as the oxidative fragmentation of the pentose substrate. Both reactions occur simultaneously and in competition at the same active site. This chain is Ribulose bisphosphate carboxylase large chain 2, found in Acidithiobacillus ferrooxidans (strain ATCC 23270 / DSM 14882 / CIP 104768 / NCIMB 8455) (Ferrobacillus ferrooxidans (strain ATCC 23270)).